The primary structure comprises 323 residues: Elongation factor P--(R)-beta-lysine ligase (323 aa).

74 to 76 (SPE) provides a ligand contact to substrate. ATP contacts are provided by residues 98–100 (RNE) and Asn107. Tyr116 provides a ligand contact to substrate. 242 to 243 (EL) is a binding site for ATP. Position 249 (Glu249) interacts with substrate. Gly298 provides a ligand contact to ATP.

This sequence belongs to the class-II aminoacyl-tRNA synthetase family. EpmA subfamily. As to quaternary structure, homodimer.

It catalyses the reaction D-beta-lysine + L-lysyl-[protein] + ATP = N(6)-((3R)-3,6-diaminohexanoyl)-L-lysyl-[protein] + AMP + diphosphate + H(+). With EpmB is involved in the beta-lysylation step of the post-translational modification of translation elongation factor P (EF-P). Catalyzes the ATP-dependent activation of (R)-beta-lysine produced by EpmB, forming a lysyl-adenylate, from which the beta-lysyl moiety is then transferred to the epsilon-amino group of a conserved specific lysine residue in EF-P. This chain is Elongation factor P--(R)-beta-lysine ligase, found in Vibrio campbellii (strain ATCC BAA-1116).